The sequence spans 675 residues: Methionine--tRNA ligase (675 aa).

Residues 15 to 25 (PYANGSIHLGH) carry the 'HIGH' region motif. Zn(2+) is bound by residues Cys-146, Cys-149, Cys-159, and Cys-162. The 'KMSKS' region motif lies at 332–336 (KMSKS). Lys-335 contacts ATP. The 103-residue stretch at 573 to 675 (DFAKVDMRIA…SGAQPGMQVK (103 aa)) folds into the tRNA-binding domain.

The protein belongs to the class-I aminoacyl-tRNA synthetase family. MetG type 1 subfamily. In terms of assembly, homodimer. Zn(2+) serves as cofactor.

The protein localises to the cytoplasm. It carries out the reaction tRNA(Met) + L-methionine + ATP = L-methionyl-tRNA(Met) + AMP + diphosphate. Its function is as follows. Is required not only for elongation of protein synthesis but also for the initiation of all mRNA translation through initiator tRNA(fMet) aminoacylation. The chain is Methionine--tRNA ligase from Yersinia pestis bv. Antiqua (strain Angola).